The sequence spans 2381 residues: Highly reducing polyketide synthase virA (2381 aa).

In terms of domain architecture, Ketosynthase family 3 (KS3) spans 1–420 (MDALHLACHL…GANGHVILES (420 aa)). Catalysis depends on for beta-ketoacyl synthase activity residues C171, H306, and H344. The tract at residues 535–851 (VFTGQGAQYA…PYSPTLVRKE (317 aa)) is malonyl-CoA:ACP transacylase (MAT) domain. Catalysis depends on S629, which acts as the For malonyltransferase activity. The tract at residues 920 to 1064 (HELLGTRATA…GSIRVMESTL (145 aa)) is N-terminal hotdog fold. The dehydratase (DH) domain stretch occupies residues 920-1232 (HELLGTRATA…HLRMNEYTGK (313 aa)). One can recognise a PKS/mFAS DH domain in the interval 920–1235 (HELLGTRATA…MNEYTGKAPV (316 aa)). The active-site Proton acceptor; for dehydratase activity is H952. The tract at residues 1078–1235 (HEVWGMSRWY…MNEYTGKAPV (158 aa)) is C-terminal hotdog fold. D1144 serves as the catalytic Proton donor; for dehydratase activity. Positions 1639 to 1956 (GMTDTIHFQQ…NKDRVGKVVV (318 aa)) are enoyl reductase (ER) domain. Residues 1981 to 2159 (TYLLVGCLGG…AVSVGLGMIS (179 aa)) form a ketoreductase (KR) domain region. Positions 2297 to 2375 (TMLDAILRLT…TLAEFIEEKL (79 aa)) constitute a Carrier domain. Residue S2334 is modified to O-(pantetheine 4'-phosphoryl)serine.

It functions in the pathway secondary metabolite biosynthesis. Its function is as follows. Highly reducing polyketide synthase; part of the gene cluster that mediates the biosynthesis of virensols and trichoxide, fungal natural products that contain or are derived from a salicylaldehyde core. The pathway begins with the synthesis of the reduced chain in virensol C by the highly reducing polyketide synthase virA via condensation of one acetate and 8 malonate units. VirA has interesting programming rules since the first 2 ketides are fully reduced, the 3 following ketides undergo beta-dehydration, and the last 3 ketides are only reduced to beta-hydroxys to yield the trihydroxy portion. The production of aldehyde virensol C by virA alone is surprising, since virA does not contain a reductase (R) domain that is typically associated with reductive product release in HRPKS. The cupin-domain enzyme virC is involved in enhancing virA product turnover. The short-chain dehydrogenase virB then oxidizes the C-7 alcohol of virensol C to a ketone, yielding virensol D. Virensol D is further transformed to salicylaldehyde 5-deoxyaurocitrin by the short-chain dehydrogenase virD. VirD catalyzes the dehydrogenation of C-3 to form the beta-ketone aldehyde, which is followed by the generation of the nucleophilic C-2 that is required for the intramolecular aldol condensation between C-2 and C-7, itself followed by dehydration and aromatization which leads to salicylaldehyde 5-deoxyaurocitrin. While the dehydrogenation of virensol D is definitely catalyzed by virD, the aldol condensation and dehydration may be uncatalyzed or assisted by virD. The short chain dehydrogenase virG then converts salicylaldehyde 5-deoxyaurocitrin into virensol B which is further hydroxylated by the cytochrome P450 monooxygenase virE to yield the hydroquinone virensol A. VirI then may oxidize virensol A to form the quinone, while virH performs the epoxidation. Finally, the two remaining short-chain dehydrogenases, virK and virL, are probably responsible for reducing the ketones to the corresponding alcohols to furnish the epoxycyclohexanol structure in trichoxide. This chain is Highly reducing polyketide synthase virA, found in Hypocrea virens (strain Gv29-8 / FGSC 10586) (Gliocladium virens).